We begin with the raw amino-acid sequence, 517 residues long: Acetylcholine receptor subunit delta (517 aa).

An N-terminal signal peptide occupies residues 1-21 (MEGPVLTLGLLAALAVCGSWG). Over 22–245 (LNEEERLIRH…ITFYLIIRRK (224 aa)) the chain is Extracellular. Asn-97 and Asn-164 each carry an N-linked (GlcNAc...) asparagine glycan. A disulfide bond links Cys-151 and Cys-165. Transmembrane regions (helical) follow at residues 246-270 (PLFYIINILVPCVLISFMVNLVFYL), 278-299 (TSVAISVLLAQSVFLLLISKRL), and 312-333 (FLLFGMVLVTMVVVICVIVLNI). At 334-471 (HFRTPSTHVL…WNRVARTVDR (138 aa)) the chain is on the cytoplasmic side. Tyr-390 is subject to Phosphotyrosine; by Tyr-kinases. The chain crosses the membrane as a helical span at residues 472–490 (LCLFVVTPVMVVGTAWIFL).

It belongs to the ligand-gated ion channel (TC 1.A.9) family. Acetylcholine receptor (TC 1.A.9.1) subfamily. Delta/CHRND sub-subfamily. Pentamer of two alpha chains, and one each of the beta, delta, and gamma (in immature muscle) or epsilon (in mature muscle) chains. The muscle heteropentamer composed of alpha-1, beta-1, delta, epsilon subunits interacts with the alpha-conotoxin ImII.

It localises to the postsynaptic cell membrane. The protein localises to the cell membrane. The enzyme catalyses K(+)(in) = K(+)(out). The catalysed reaction is Na(+)(in) = Na(+)(out). After binding acetylcholine, the AChR responds by an extensive change in conformation that affects all subunits and leads to opening of an ion-conducting channel across the plasma membrane. The sequence is that of Acetylcholine receptor subunit delta from Homo sapiens (Human).